The following is a 128-amino-acid chain: Aspartate 1-decarboxylase (128 aa).

S25 acts as the Schiff-base intermediate with substrate; via pyruvic acid in catalysis. The residue at position 25 (S25) is a Pyruvic acid (Ser). T57 provides a ligand contact to substrate. Residue Y58 is the Proton donor of the active site. A substrate-binding site is contributed by G73–A75.

The protein belongs to the PanD family. Heterooctamer of four alpha and four beta subunits. Pyruvate is required as a cofactor. Is synthesized initially as an inactive proenzyme, which is activated by self-cleavage at a specific serine bond to produce a beta-subunit with a hydroxyl group at its C-terminus and an alpha-subunit with a pyruvoyl group at its N-terminus.

It localises to the cytoplasm. It carries out the reaction L-aspartate + H(+) = beta-alanine + CO2. It participates in cofactor biosynthesis; (R)-pantothenate biosynthesis; beta-alanine from L-aspartate: step 1/1. Its function is as follows. Catalyzes the pyruvoyl-dependent decarboxylation of aspartate to produce beta-alanine. This Burkholderia multivorans (strain ATCC 17616 / 249) protein is Aspartate 1-decarboxylase.